We begin with the raw amino-acid sequence, 365 residues long: Probable dual-specificity RNA methyltransferase RlmN (365 aa).

Glu-106 acts as the Proton acceptor in catalysis. The region spanning 112–352 (YPDRVTLCVS…VTVRDTRGRE (241 aa)) is the Radical SAM core domain. Residues Cys-119 and Cys-357 are joined by a disulfide bond. The [4Fe-4S] cluster site is built by Cys-126, Cys-130, and Cys-133. Residues 181-182 (GE), Ser-215, 238-240 (SLH), and Asn-314 contribute to the S-adenosyl-L-methionine site. The S-methylcysteine intermediate role is filled by Cys-357.

The protein belongs to the radical SAM superfamily. RlmN family. [4Fe-4S] cluster serves as cofactor.

Its subcellular location is the cytoplasm. The enzyme catalyses adenosine(2503) in 23S rRNA + 2 reduced [2Fe-2S]-[ferredoxin] + 2 S-adenosyl-L-methionine = 2-methyladenosine(2503) in 23S rRNA + 5'-deoxyadenosine + L-methionine + 2 oxidized [2Fe-2S]-[ferredoxin] + S-adenosyl-L-homocysteine. It catalyses the reaction adenosine(37) in tRNA + 2 reduced [2Fe-2S]-[ferredoxin] + 2 S-adenosyl-L-methionine = 2-methyladenosine(37) in tRNA + 5'-deoxyadenosine + L-methionine + 2 oxidized [2Fe-2S]-[ferredoxin] + S-adenosyl-L-homocysteine. Specifically methylates position 2 of adenine 2503 in 23S rRNA and position 2 of adenine 37 in tRNAs. In Thermobifida fusca (strain YX), this protein is Probable dual-specificity RNA methyltransferase RlmN.